Here is a 565-residue protein sequence, read N- to C-terminus: NAD-dependent malic enzyme (565 aa).

The active-site Proton donor is the Tyr-104. Arg-157 is a binding site for NAD(+). Lys-175 acts as the Proton acceptor in catalysis. Residues Glu-246, Asp-247, and Asp-270 each coordinate a divalent metal cation. Residues Asp-270 and Asn-418 each contribute to the NAD(+) site.

It belongs to the malic enzymes family. As to quaternary structure, homotetramer. The cofactor is Mg(2+). It depends on Mn(2+) as a cofactor.

It catalyses the reaction (S)-malate + NAD(+) = pyruvate + CO2 + NADH. It carries out the reaction oxaloacetate + H(+) = pyruvate + CO2. This Sodalis glossinidius (strain morsitans) protein is NAD-dependent malic enzyme.